The chain runs to 200 residues: uncharacterized protein (200 aa).

This is an uncharacterized protein from Bacillus subtilis (strain 168).